We begin with the raw amino-acid sequence, 415 residues long: Gamma-glutamyl phosphate reductase (415 aa).

This sequence belongs to the gamma-glutamyl phosphate reductase family.

The protein localises to the cytoplasm. It catalyses the reaction L-glutamate 5-semialdehyde + phosphate + NADP(+) = L-glutamyl 5-phosphate + NADPH + H(+). It functions in the pathway amino-acid biosynthesis; L-proline biosynthesis; L-glutamate 5-semialdehyde from L-glutamate: step 2/2. Catalyzes the NADPH-dependent reduction of L-glutamate 5-phosphate into L-glutamate 5-semialdehyde and phosphate. The product spontaneously undergoes cyclization to form 1-pyrroline-5-carboxylate. This is Gamma-glutamyl phosphate reductase from Listeria welshimeri serovar 6b (strain ATCC 35897 / DSM 20650 / CCUG 15529 / CIP 8149 / NCTC 11857 / SLCC 5334 / V8).